Here is a 522-residue protein sequence, read N- to C-terminus: Protein nucleotidyltransferase YdiU (522 aa).

8 residues coordinate ATP: glycine 109, glycine 111, arginine 112, lysine 132, aspartate 144, glycine 145, arginine 195, and arginine 202. The Proton acceptor role is filled by aspartate 271. Positions 272 and 281 each coordinate Mg(2+). Aspartate 281 contributes to the ATP binding site.

The protein belongs to the SELO family. The cofactor is Mg(2+). Mn(2+) serves as cofactor.

The catalysed reaction is L-seryl-[protein] + ATP = 3-O-(5'-adenylyl)-L-seryl-[protein] + diphosphate. It catalyses the reaction L-threonyl-[protein] + ATP = 3-O-(5'-adenylyl)-L-threonyl-[protein] + diphosphate. It carries out the reaction L-tyrosyl-[protein] + ATP = O-(5'-adenylyl)-L-tyrosyl-[protein] + diphosphate. The enzyme catalyses L-histidyl-[protein] + UTP = N(tele)-(5'-uridylyl)-L-histidyl-[protein] + diphosphate. The catalysed reaction is L-seryl-[protein] + UTP = O-(5'-uridylyl)-L-seryl-[protein] + diphosphate. It catalyses the reaction L-tyrosyl-[protein] + UTP = O-(5'-uridylyl)-L-tyrosyl-[protein] + diphosphate. Functionally, nucleotidyltransferase involved in the post-translational modification of proteins. It can catalyze the addition of adenosine monophosphate (AMP) or uridine monophosphate (UMP) to a protein, resulting in modifications known as AMPylation and UMPylation. In Burkholderia vietnamiensis (strain G4 / LMG 22486) (Burkholderia cepacia (strain R1808)), this protein is Protein nucleotidyltransferase YdiU.